A 140-amino-acid polypeptide reads, in one-letter code: ATP synthase epsilon chain (140 aa).

This sequence belongs to the ATPase epsilon chain family. As to quaternary structure, F-type ATPases have 2 components, CF(1) - the catalytic core - and CF(0) - the membrane proton channel. CF(1) has five subunits: alpha(3), beta(3), gamma(1), delta(1), epsilon(1). CF(0) has three main subunits: a, b and c.

It is found in the cell inner membrane. In terms of biological role, produces ATP from ADP in the presence of a proton gradient across the membrane. This is ATP synthase epsilon chain from Yersinia pseudotuberculosis serotype O:1b (strain IP 31758).